The following is a 259-amino-acid chain: HTH-type transcriptional regulator Rv1931c (259 aa).

The span at 104-121 shows a compositional bias: basic residues; that stretch reads SHRRHRPRAGTGRRRPRH. The interval 104 to 170 is disordered; it reads SHRRHRPRAG…GAGGHRGRAG (67 aa). The region spanning 174–257 is the HTH araC/xylS-type domain; sequence RIGELAQRAA…GISPDQYRKA (84 aa). 2 DNA-binding regions (H-T-H motif) span residues 176 to 197 and 224 to 247; these read GELA…SDEV and VVAI…IRRV.

In terms of biological role, controls the expression of genes important for virulence. This chain is HTH-type transcriptional regulator Rv1931c, found in Mycobacterium tuberculosis (strain ATCC 25618 / H37Rv).